The chain runs to 142 residues: Universal stress protein D (142 aa).

The protein belongs to the universal stress protein A family.

The protein resides in the cytoplasm. Functionally, required for resistance to DNA-damaging agents. The chain is Universal stress protein D (uspD) from Escherichia coli O157:H7.